Consider the following 299-residue polypeptide: Virginiamycin B lyase (299 aa).

His-229 serves as a coordination point for substrate. Glu-269 provides a ligand contact to Mg(2+). Residue His-271 is the Proton acceptor of the active site. Glu-286 serves as a coordination point for Mg(2+).

Belongs to the Vgb family. In terms of assembly, monomer. Mg(2+) serves as cofactor.

Its function is as follows. Inactivates the type B streptogramin antibiotics by linearizing the lactone ring at the ester linkage, generating a free phenylglycine carboxylate and converting the threonyl moiety into 2-amino-butenoic acid. The sequence is that of Virginiamycin B lyase from Bordetella parapertussis (strain 12822 / ATCC BAA-587 / NCTC 13253).